The sequence spans 1189 residues: Pumilio homolog 1 (1189 aa).

5 disordered regions span residues 24–65, 233–288, 491–525, 614–652, and 743–774; these read QHAQ…SSPV, SCLR…QNGI, QQTTQQTQQGQQQVLRGGASQRPLTPNQNQQGQQT, AGTTNGPFRPLGTQQPQPQPQQQPTNNLASSSFYGNNSL, and GPVGMPLPSQGPGHSQTPPPSLSSHGSSSSLN. Low complexity predominate over residues 45 to 58; the sequence is QAQPQPAANQALAA. Positions 250-277 are enriched in basic and acidic residues; that stretch reads NDKGDKKNKGTFDGDKLGDLKEEGDVMD. Residues 491–503 are compositionally biased toward low complexity; it reads QQTTQQTQQGQQQ. Residues 512–525 show a composition bias toward polar residues; that stretch reads RPLTPNQNQQGQQT. Composition is skewed to low complexity over residues 627–652 and 764–774; these read QQPQPQPQQQPTNNLASSSFYGNNSL and LSSHGSSSSLN. One can recognise a PUM-HD domain in the interval 829-1171; that stretch reads GRSRLLEDFR…HILAKLEKYY (343 aa). Pumilio repeat units follow at residues 849–884, 885–920, 921–958, 959–994, 995–1030, 1031–1066, 1067–1102, and 1106–1145; these read EIAGHIMEFSQDQHGSRFIQLKLERATPAERQLVFN, EILQAAYQLMVDVFGNYVIQKFFEFGSLEQKLALAE, RIRGHVLSLALQMYGCRVIQKALEFIPPDQQVINEMVR, ELDGHVLKCVKDQNGNHVVQKCIECVQPQSLQFIID, AFKGQVFALSTHPYGCRVIQRILEHCLPEQTLPILE, ELHQHTEQLVQDQYGNYVIQHVLEHGRPEDKSKIVA, EIRGNVLVLSQHKFASNVVEKCVTHASRTERAMLID, and TMNDGPHSALYTMMKDQYANYVVQKMIDVAEPAQRKIVMH. The adenine-nucleotide binding in RNA target stretch occupies residues 864 to 868; sequence SRFIQ. The segment at 900 to 904 is uracil-nucleotide binding in RNA target; that stretch reads NYVIQ. The segment at 936–940 is adenine-nucleotide binding in RNA target; sequence CRVIQ. The tract at residues 974–978 is non-specific-nucleotide binding in RNA target; sequence NHVVQ. The tract at residues 1010-1014 is adenine-nucleotide binding in RNA target; that stretch reads CRVIQ. Residues 1046 to 1050 are uracil-nucleotide binding in RNA target; sequence NYVIQ. Guanine-nucleotide binding in RNA target regions lie at residues 1082 to 1086 and 1083 to 1086; these read SNVVE and NVVE. The uracil-nucleotide binding in RNA target stretch occupies residues 1125–1129; it reads NYVVQ.

Detected in embryonic male and female gonads, heart, liver and muscle. Detected in adult brain, testis, ovary, heart, lung, spleen, kidney and muscle.

Its subcellular location is the cytoplasm. It is found in the P-body. It localises to the cytoplasmic granule. Sequence-specific RNA-binding protein that acts as a post-transcriptional repressor by binding the 3'-UTR of mRNA targets. Binds to an RNA consensus sequence, the Pumilio Response Element (PRE), 5'-UGUANAUA-3', that is related to the Nanos Response Element (NRE). Mediates post-transcriptional repression of transcripts via different mechanisms: acts via direct recruitment of the CCR4-POP2-NOT deadenylase leading to translational inhibition and mRNA degradation. Also mediates deadenylation-independent repression by promoting accessibility of miRNAs. The chain is Pumilio homolog 1 (PUM1) from Gallus gallus (Chicken).